Consider the following 234-residue polypeptide: MTRTPTGVPMHLGHTHDAPAAVSADATRPDGTRRALRIGLGGPVGSGKTATVAALCRELRDRLSIAVVTNDIYTREDADFLLKNAVLPPERIQAVETGACPHTAIRDDISANLEAVEDLEDAVGPLDLILVESGGDNLTATFSKGLVDAQIFVIDVAGGDDIPRKGGPGVTTADLLVVNKTDLAPYVGSDLERMALDAKKQRGDLPVAFTSLTSAEGVGPVADWVRAQLAAWAA.

The interval 1 to 29 (MTRTPTGVPMHLGHTHDAPAAVSADATRP) is disordered. 42–49 (GPVGSGKT) contacts GTP.

Belongs to the SIMIBI class G3E GTPase family. UreG subfamily. Homodimer. UreD, UreF and UreG form a complex that acts as a GTP-hydrolysis-dependent molecular chaperone, activating the urease apoprotein by helping to assemble the nickel containing metallocenter of UreC. The UreE protein probably delivers the nickel.

The protein localises to the cytoplasm. Its function is as follows. Facilitates the functional incorporation of the urease nickel metallocenter. This process requires GTP hydrolysis, probably effectuated by UreG. This Streptomyces griseus subsp. griseus (strain JCM 4626 / CBS 651.72 / NBRC 13350 / KCC S-0626 / ISP 5235) protein is Urease accessory protein UreG 1.